The chain runs to 314 residues: Methionyl-tRNA formyltransferase (314 aa).

A (6S)-5,6,7,8-tetrahydrofolate-binding site is contributed by 113-116 (SLLP).

This sequence belongs to the Fmt family.

The enzyme catalyses L-methionyl-tRNA(fMet) + (6R)-10-formyltetrahydrofolate = N-formyl-L-methionyl-tRNA(fMet) + (6S)-5,6,7,8-tetrahydrofolate + H(+). Attaches a formyl group to the free amino group of methionyl-tRNA(fMet). The formyl group appears to play a dual role in the initiator identity of N-formylmethionyl-tRNA by promoting its recognition by IF2 and preventing the misappropriation of this tRNA by the elongation apparatus. This is Methionyl-tRNA formyltransferase from Pseudomonas aeruginosa (strain LESB58).